The chain runs to 393 residues: Negative regulator of ofd1 (393 aa).

Positions M1–E51 are disordered. A compositionally biased stretch (basic and acidic residues) spans Q19–A28. The segment covering L32–V47 has biased composition (polar residues).

This sequence belongs to the ETT1 family. As to quaternary structure, interacts with ofd1.

The protein localises to the cytoplasm. It localises to the nucleus. Required for correct translation termination. Positive regulator of the stability of the N-terminal transcription factor domain (Sre1N) of sre1 which is released from the membrane and enters the nucleus to activate hypoxic gene expression. Also acts as a direct inhibitor of ofd1. Functions probably by inhibiting the ability of the ofd1 to accelerate Sre1N degradation in absence of oxygen. The protein is Negative regulator of ofd1 (nro1) of Schizosaccharomyces pombe (strain 972 / ATCC 24843) (Fission yeast).